The primary structure comprises 1883 residues: Zinc finger protein 106 (1883 aa).

Glycyl lysine isopeptide (Lys-Gly) (interchain with G-Cter in SUMO2) cross-links involve residues Ile-6 and Lys-37. The C2H2-type 1; atypical zinc-finger motif lies at 20-44 (HECRVCGVTEVGLSAYAKHISGQLH). The interval 39–162 (ISGQLHKDNV…NGGGPRGRSG (124 aa)) is disordered. Acidic residues predominate over residues 52–67 (EREDDGKGEEEEEDYF). Residues Lys-69 and Lys-76 each participate in a glycyl lysine isopeptide (Lys-Gly) (interchain with G-Cter in SUMO2) cross-link. Composition is skewed to basic and acidic residues over residues 77 to 86 (QRKEQSRQDE), 96 to 116 (SDDR…DRES), and 128 to 138 (PQRDWKWEKDG). Residue Lys-133 forms a Glycyl lysine isopeptide (Lys-Gly) (interchain with G-Cter in SUMO2) linkage. The span at 139–148 (FNNTRKNSFP) shows a compositional bias: polar residues. Glycyl lysine isopeptide (Lys-Gly) (interchain with G-Cter in SUMO2) cross-links involve residues Lys-243, Lys-287, and Lys-305. Polar residues predominate over residues 322–338 (QTTKQADTATSKVSGKN). Residues 322 to 356 (QTTKQADTATSKVSGKNGSAAREKPRRWTPYPSQK) form a disordered region. Glycyl lysine isopeptide (Lys-Gly) (interchain with G-Cter in SUMO2) cross-links involve residues Lys-356, Lys-365, Lys-371, and Lys-417. The disordered stretch occupies residues 389-423 (IQEPQTDETRNSPTQKTQKEIHTGSLNHKASSDSA). The span at 412–423 (GSLNHKASSDSA) shows a compositional bias: polar residues. The residue at position 422 (Ser-422) is a Phosphoserine. Glycyl lysine isopeptide (Lys-Gly) (interchain with G-Cter in SUMO2) cross-links involve residues Lys-451, Lys-461, Lys-477, Lys-492, Lys-505, Lys-515, Lys-525, Lys-539, and Lys-557. The segment at 457–501 (CPATKSLSQKQDPKNISKNTKTNFFSPGEHSNPSNKPTVEDNHGP) is disordered. Positions 461-493 (KSLSQKQDPKNISKNTKTNFFSPGEHSNPSNKP) are enriched in polar residues. Residues 586-637 (LEDESDGETSDTEKHGTKIGTLGSATTELLSGSTRTADEKEEDDRILKTSRE) form a disordered region. Residue Ser-590 is modified to Phosphoserine. Residue Lys-603 forms a Glycyl lysine isopeptide (Lys-Gly) (interchain with G-Cter in SUMO2) linkage. Residues 608-620 (GSATTELLSGSTR) are compositionally biased toward polar residues. Ser-641 and Ser-661 each carry phosphoserine. Residues Lys-671, Lys-684, Lys-705, Lys-721, Lys-741, Lys-775, and Lys-807 each participate in a glycyl lysine isopeptide (Lys-Gly) (interchain with G-Cter in SUMO2) cross-link. Phosphoserine is present on residues Ser-859, Ser-861, Ser-864, and Ser-893. Residues 879 to 945 (EEGTGKENEP…HSAQLSSDHI (67 aa)) are disordered. Residues 888 to 906 (PQQMVSPSNSLRAGQSQKA) show a composition bias toward polar residues. Glycyl lysine isopeptide (Lys-Gly) (interchain with G-Cter in SUMO2) cross-links involve residues Lys-905 and Lys-911. Ser-937 carries the post-translational modification Phosphoserine. Lys-953 is covalently cross-linked (Glycyl lysine isopeptide (Lys-Gly) (interchain with G-Cter in SUMO2)). The span at 958 to 976 (QERSIPPSENQNSQESNGE) shows a compositional bias: polar residues. 4 disordered regions span residues 958–982 (QERS…CLSS), 997–1048 (ATDS…KERS), 1121–1140 (EPSE…RRNS), and 1182–1218 (PTFQ…VPPS). Thr-1021 is modified (phosphothreonine). 3 positions are modified to phosphoserine: Ser-1025, Ser-1026, and Ser-1031. Residues 1035 to 1045 (KNKRRKIKGKK) show a composition bias toward basic residues. Ser-1249 is subject to Phosphoserine. The segment at 1252-1483 (ESTESFHEPS…EVSSTSEIGT (232 aa)) is disordered. Residues 1255-1277 (ESFHEPSQELKFSVEQRNTRNRE) are compositionally biased toward basic and acidic residues. Lys-1265 participates in a covalent cross-link: Glycyl lysine isopeptide (Lys-Gly) (interchain with G-Cter in SUMO2). 2 stretches are compositionally biased toward polar residues: residues 1278 to 1291 (NSPS…SSIN) and 1299 to 1312 (KGNS…SSFL). Ser-1279, Ser-1281, and Ser-1284 each carry phosphoserine. Lys-1299 is covalently cross-linked (Glycyl lysine isopeptide (Lys-Gly) (interchain with G-Cter in SUMO2)). Ser-1302 is modified (phosphoserine). Lys-1324 participates in a covalent cross-link: Glycyl lysine isopeptide (Lys-Gly) (interchain with G-Cter in SUMO2). Residue Ser-1328 is modified to Phosphoserine. The span at 1333–1346 (PEQQAESTLTSAET) shows a compositional bias: polar residues. Positions 1349–1362 (SKKKKKLRKKKSLR) are enriched in basic residues. Ser-1370 is subject to Phosphoserine. Residue Thr-1372 is modified to Phosphothreonine. Residues Lys-1380, Lys-1392, and Lys-1395 each participate in a glycyl lysine isopeptide (Lys-Gly) (interchain with G-Cter in SUMO2) cross-link. Basic and acidic residues-rich tracts occupy residues 1402-1416 (EDSR…VRDE) and 1444-1456 (GEEK…KKDI). Lys-1454 is covalently cross-linked (Glycyl lysine isopeptide (Lys-Gly) (interchain with G-Cter in SUMO2)). The segment covering 1457–1481 (WNSTEQNPLETSRSGCDEVSSTSEI) has biased composition (polar residues). Position 1468 is a phosphoserine (Ser-1468). Residues Lys-1486 and Lys-1504 each participate in a glycyl lysine isopeptide (Lys-Gly) (interchain with G-Cter in SUMO2) cross-link. Positions 1502–1513 (SIKGSKNSSEIS) are enriched in polar residues. Residues 1502 to 1527 (SIKGSKNSSEISSEPGDDDEPTEGSF) form a disordered region. 6 WD repeats span residues 1529 to 1568 (GHQA…GVFE), 1570 to 1611 (HTSK…CVEQ), 1654 to 1695 (HGPR…LLRT), 1698 to 1737 (GHSK…RIYK), 1738 to 1775 (GHNH…RLQV), and 1778 to 1815 (GHKD…NYRC). Lys-1585 participates in a covalent cross-link: Glycyl lysine isopeptide (Lys-Gly) (interchain with G-Cter in SUMO2). Residue Lys-1737 forms a Glycyl lysine isopeptide (Lys-Gly) (interchain with G-Cter in SUMO2) linkage. The C2H2-type 2; atypical zinc-finger motif lies at 1813–1838 (YRCWWHGCSLIFGVVDHLKQHLLTDH). Lys-1864 participates in a covalent cross-link: Glycyl lysine isopeptide (Lys-Gly) (interchain with G-Cter in SUMO2).

Interacts with KNOP1. Interacts with TARDBP and NUP107. Interacts (via N-terminus) with RBM39. Interacts with the SH3 domains of FYN and GRB2. Phosphorylated by FYN in vitro.

It localises to the nucleus. Its subcellular location is the nucleolus. It is found in the nucleus speckle. Its function is as follows. RNA-binding protein. Specifically binds to 5'-GGGGCC-3' sequence repeats in RNA. Essential for maintenance of peripheral motor neuron and skeletal muscle function. Required for normal expression and/or alternative splicing of a number of genes in spinal cord and skeletal muscle, including the neurite outgrowth inhibitor RTN4. Also contributes to normal mitochondrial respiratory function in motor neurons, via an unknown mechanism. In Homo sapiens (Human), this protein is Zinc finger protein 106 (ZNF106).